A 226-amino-acid chain; its full sequence is LysM and putative peptidoglycan-binding domain-containing protein 1 (226 aa).

S23 and S33 each carry phosphoserine. The region spanning 40-84 (LEHQLEPGDTLAGLALKYGVTMEQIKRTNRLYTNDSIFLKKTLYI) is the LysM domain. The tract at residues 95-156 (NGLDSEEEND…PSHDLSASDF (62 aa)) is disordered. The segment covering 98-107 (DSEEENDGEE) has biased composition (acidic residues). A Phosphoserine modification is found at S99. Residues 142 to 151 (QETSTPSHDL) are compositionally biased toward polar residues. Residues S165, S180, S193, and S211 each carry the phosphoserine modification. Residues 170-226 (AAAQKLRKGESGVPEEDTGLYPSSPRMQQRAVLGPVPLTRTSRTQTLRDQEDEIFKL) are disordered. The span at 215 to 226 (TLRDQEDEIFKL) shows a compositional bias: basic and acidic residues.

The chain is LysM and putative peptidoglycan-binding domain-containing protein 1 (Lysmd1) from Mus musculus (Mouse).